Here is a 29-residue protein sequence, read N- to C-terminus: Cytochrome b6-f complex subunit 8 (29 aa).

Residues 3 to 23 (ILSLGWAALMTMFTFSLALTV) traverse the membrane as a helical segment.

Belongs to the PetN family. As to quaternary structure, the 4 large subunits of the cytochrome b6-f complex are cytochrome b6, subunit IV (17 kDa polypeptide, PetD), cytochrome f and the Rieske protein, while the 4 small subunits are PetG, PetL, PetM and PetN. The complex functions as a dimer.

Its subcellular location is the plastid. It is found in the chloroplast thylakoid membrane. Its function is as follows. Component of the cytochrome b6-f complex, which mediates electron transfer between photosystem II (PSII) and photosystem I (PSI), cyclic electron flow around PSI, and state transitions. The protein is Cytochrome b6-f complex subunit 8 of Phaeodactylum tricornutum (strain CCAP 1055/1).